The sequence spans 286 residues: 2-dehydro-3-deoxyphosphooctonate aldolase (286 aa).

It belongs to the KdsA family.

It localises to the cytoplasm. It carries out the reaction D-arabinose 5-phosphate + phosphoenolpyruvate + H2O = 3-deoxy-alpha-D-manno-2-octulosonate-8-phosphate + phosphate. It functions in the pathway carbohydrate biosynthesis; 3-deoxy-D-manno-octulosonate biosynthesis; 3-deoxy-D-manno-octulosonate from D-ribulose 5-phosphate: step 2/3. Its pathway is bacterial outer membrane biogenesis; lipopolysaccharide biosynthesis. The protein is 2-dehydro-3-deoxyphosphooctonate aldolase of Shewanella denitrificans (strain OS217 / ATCC BAA-1090 / DSM 15013).